The following is a 382-amino-acid chain: Mannitol-1-phosphate 5-dehydrogenase (382 aa).

3-14 contributes to the NAD(+) binding site; the sequence is AVHFGAGNIGRG.

This sequence belongs to the mannitol dehydrogenase family.

The catalysed reaction is D-mannitol 1-phosphate + NAD(+) = beta-D-fructose 6-phosphate + NADH + H(+). The protein is Mannitol-1-phosphate 5-dehydrogenase of Aliivibrio salmonicida (strain LFI1238) (Vibrio salmonicida (strain LFI1238)).